Reading from the N-terminus, the 866-residue chain is Oxidation resistance protein 1 (866 aa).

A disordered region spans residues 1-92 (MSVSNLSWLK…KKDGRRMSFQ (92 aa)). Residues 63–88 (RKSELKRFYTIDTGQKKTLDKKDGRR) show a composition bias toward basic and acidic residues. The residue at position 90 (S90) is a Phosphoserine. The region spanning 98–141 (IEYTVESRDSLNSIALKFDTTPNELVQLNKLFSRAVVTGQVLYV) is the LysM domain. Position 118 is a phosphothreonine (T118). The span at 150-168 (VESSPSLSPVSPLSPTSSE) shows a compositional bias: low complexity. The tract at residues 150–202 (VESSPSLSPVSPLSPTSSEAEFDKTTTPDVAHPKEAPPASTVSGIRPARVVSS) is disordered. Basic and acidic residues predominate over residues 170–184 (EFDKTTTPDVAHPKE). Phosphoserine is present on residues S201, S202, and S204. Positions 213–268 (KFLKINCKYITIGKGTVSGVLLVTPNNIMFDPHKTDPLVQENGCEEYGIMCPMEEV) constitute a GRAM domain. A disordered region spans residues 293-540 (LSGRGSCHSK…AHGEGSSLLK (248 aa)). A phosphoserine mark is found at S294, S334, and S336. Residue T341 is modified to Phosphothreonine. At S346 the chain carries Phosphoserine. Residues 347–363 (PIREELLSSEPRQEKSS) are compositionally biased toward basic and acidic residues. The segment covering 364-399 (DASSESVQTVSQMEVQSLTATSEAANVPDRTSSNPG) has biased composition (polar residues). Positions 433–447 (QSTEVKGQDNQDSSH) are enriched in basic and acidic residues. Positions 448-465 (QESSLQQEAGEDSVSSGE) are enriched in polar residues. The span at 483–497 (ELKRDSETEVEELRK) shows a compositional bias: basic and acidic residues. S488 is modified (phosphoserine). A compositionally biased stretch (polar residues) spans 502–519 (HSMQQAKQQRDTIQQVSQ). Residues 543–570 (RRHRLHKFLCLRVGKPMRKTFVSQASAT) are mediates oxidative antimutator activity. Positions 682-703 (KQVAPAKADLEPESFRPNLSDP) are disordered. In terms of domain architecture, TLDc spans 705–866 (ELLLPDQIEK…IQDIEIWAFE (162 aa)).

The protein belongs to the OXR1 family. In terms of tissue distribution, highly expressed in brain and testis.

The protein resides in the mitochondrion. Its subcellular location is the nucleus. It is found in the nucleolus. Its function is as follows. May be involved in protection from oxidative damage. This is Oxidation resistance protein 1 (Oxr1) from Mus musculus (Mouse).